A 237-amino-acid polypeptide reads, in one-letter code: Oligoribonuclease, mitochondrial (237 aa).

The transit peptide at 1–25 directs the protein to the mitochondrion; that stretch reads MLGVSLGARLLRGVGGRRGQFGARG. Residues 43–207 form the Exonuclease domain; the sequence is MVWVDLEMTG…DDISESIKEL (165 aa). Mg(2+)-binding residues include Asp-47 and Glu-49. A Phosphoserine modification is found at Ser-92. Tyr-122 bears the Phosphotyrosine mark. Residue Asp-147 participates in Mg(2+) binding. Lys-173 carries the post-translational modification N6-acetyllysine. His-194 is an active-site residue. Asp-199 contributes to the Mg(2+) binding site.

It belongs to the oligoribonuclease family. As to quaternary structure, homodimer. Homotetramer. Mn(2+) serves as cofactor. Requires Mg(2+) as cofactor.

Its subcellular location is the mitochondrion intermembrane space. The protein resides in the mitochondrion matrix. It is found in the mitochondrion. It localises to the cytoplasm. The protein localises to the nucleus. In terms of biological role, 3'-to-5'exoribonuclease that preferentially degrades DNA and RNA oligonucleotides composed of only two nucleotides. Binds and degrades longer oligonucleotides with a lower affinity. Plays dual roles in mitochondria, scavenging nanoRNAs (small RNA oligonucleotides of &lt;5 nucleotides) that are produced by the degradosome and clearing short RNAs that are generated by RNA processing. Essential for correct initiation of mitochondrial transcription, degrading mitochondrial RNA dinucleotides to prevent RNA-primed transcription at non-canonical sites in the mitochondrial genome. Essential for embryonic development. The chain is Oligoribonuclease, mitochondrial (Rexo2) from Mus musculus (Mouse).